The sequence spans 139 residues: Nucleoside diphosphate kinase (139 aa).

Positions 11, 59, 87, 93, 104, and 114 each coordinate ATP. H117 serves as the catalytic Pros-phosphohistidine intermediate.

This sequence belongs to the NDK family. Homotetramer. It depends on Mg(2+) as a cofactor.

It is found in the cytoplasm. It carries out the reaction a 2'-deoxyribonucleoside 5'-diphosphate + ATP = a 2'-deoxyribonucleoside 5'-triphosphate + ADP. The enzyme catalyses a ribonucleoside 5'-diphosphate + ATP = a ribonucleoside 5'-triphosphate + ADP. In terms of biological role, major role in the synthesis of nucleoside triphosphates other than ATP. The ATP gamma phosphate is transferred to the NDP beta phosphate via a ping-pong mechanism, using a phosphorylated active-site intermediate. This chain is Nucleoside diphosphate kinase, found in Wolbachia sp. subsp. Drosophila simulans (strain wRi).